Reading from the N-terminus, the 114-residue chain is Hydrogenase maturation factor HypA (114 aa).

His2 lines the Ni(2+) pocket. Residues Cys73, Cys76, Cys89, and Cys92 each coordinate Zn(2+).

The protein belongs to the HypA/HybF family.

Involved in the maturation of [NiFe] hydrogenases. Required for nickel insertion into the metal center of the hydrogenase. The protein is Hydrogenase maturation factor HypA of Psychromonas ingrahamii (strain DSM 17664 / CCUG 51855 / 37).